The primary structure comprises 485 residues: PTS system arbutin-, cellobiose-, and salicin-specific EIIBC component (485 aa).

The region spanning 1–88 (MAKNYAALAR…VSLLPGDMQP (88 aa)) is the PTS EIIB type-1 domain. Residue Cys-28 is the Phosphocysteine intermediate; for EIIB activity of the active site. Helical transmembrane passes span 102-122 (IGAG…PAII), 147-167 (LTIL…MVAA), 177-197 (MSLA…ELMA), 207-227 (FALI…ALVM), 254-274 (LIVL…GIWI), 285-305 (IHGY…PLLV), 330-350 (VMPS…AVAW), 363-383 (AAAA…GVAI), 389-409 (LIAS…AGLA), and 433-453 (IVWV…LTLL). The 363-residue stretch at 108–470 (DALIGTMSPL…VEEAAAQARK (363 aa)) folds into the PTS EIIC type-1 domain.

The protein localises to the cell inner membrane. Its function is as follows. The phosphoenolpyruvate-dependent sugar phosphotransferase system (sugar PTS), a major carbohydrate active -transport system, catalyzes the phosphorylation of incoming sugar substrates concomitantly with their translocation across the cell membrane. This system is involved in arbutin, cellobiose, and salicin transport. This chain is PTS system arbutin-, cellobiose-, and salicin-specific EIIBC component (ascF), found in Escherichia coli (strain K12).